Here is a 283-residue protein sequence, read N- to C-terminus: Thymidylate synthase (283 aa).

Arg-22 is a binding site for dUMP. Catalysis depends on Cys-160, which acts as the Nucleophile. Residues 180 to 183 (RSCD), Asn-191, and 221 to 223 (HIY) each bind dUMP. Asp-183 is a (6R)-5,10-methylene-5,6,7,8-tetrahydrofolate binding site. Position 282 (Ala-282) interacts with (6R)-5,10-methylene-5,6,7,8-tetrahydrofolate.

It belongs to the thymidylate synthase family. Bacterial-type ThyA subfamily. As to quaternary structure, homodimer.

The protein resides in the cytoplasm. The catalysed reaction is dUMP + (6R)-5,10-methylene-5,6,7,8-tetrahydrofolate = 7,8-dihydrofolate + dTMP. Its pathway is pyrimidine metabolism; dTTP biosynthesis. Catalyzes the reductive methylation of 2'-deoxyuridine-5'-monophosphate (dUMP) to 2'-deoxythymidine-5'-monophosphate (dTMP) while utilizing 5,10-methylenetetrahydrofolate (mTHF) as the methyl donor and reductant in the reaction, yielding dihydrofolate (DHF) as a by-product. This enzymatic reaction provides an intracellular de novo source of dTMP, an essential precursor for DNA biosynthesis. In Shewanella frigidimarina (strain NCIMB 400), this protein is Thymidylate synthase.